Here is a 491-residue protein sequence, read N- to C-terminus: GTPase Der (491 aa).

The 176-residue stretch at 3–178 (AKIALVGRPN…EMRDLLPEED (176 aa)) folds into the EngA-type G 1 domain. GTP-binding positions include 9-16 (GRPNVGKS), 57-61 (DTGGI), and 130-133 (NKVD). Over residues 198-224 (DAETEDGASASETEEDITEETVEDEPE) the composition is skewed to acidic residues. A disordered region spans residues 198–225 (DAETEDGASASETEEDITEETVEDEPEA). In terms of domain architecture, EngA-type G 2 spans 227–400 (LRLCMLGRPN…LAARIRRECS (174 aa)). GTP-binding positions include 233 to 240 (GRPNAGKS), 280 to 284 (DTAGV), and 345 to 348 (NKMD). In terms of domain architecture, KH-like spans 401–485 (VRIPTGQLNR…PMRVHFRSSH (85 aa)).

It belongs to the TRAFAC class TrmE-Era-EngA-EngB-Septin-like GTPase superfamily. EngA (Der) GTPase family. As to quaternary structure, associates with the 50S ribosomal subunit.

Its function is as follows. GTPase that plays an essential role in the late steps of ribosome biogenesis. The sequence is that of GTPase Der from Nitratidesulfovibrio vulgaris (strain ATCC 29579 / DSM 644 / CCUG 34227 / NCIMB 8303 / VKM B-1760 / Hildenborough) (Desulfovibrio vulgaris).